The primary structure comprises 402 residues: MVCARAALGPGALWAAAWGVLLLTAPAGAQRGRKKVVHVLEGESGSVVVQTAPGQVVSHRGGTIVLPCRYHYEAAAHGHDGVRLKWTKVVDPLAFTDVFVALGPQHRAFGSYRGRAELQGDGPGDASLVLRNVTLQDYGRYECEVTNELEDDAGMVKLDLEGVVFPYHPRGGRYKLTFAEAQRACAEQDGILASAEQLHAAWRDGLDWCNAGWLRDGSVQYPVNRPREPCGGLGGTGSAGGGGDANGGLRNYGYRHNAEERYDAFCFTSNLPGRVFFLKPLRPVPFSGAARACAARGAAVAKVGQLFAAWKLQLLDRCTAGWLADGSARYPIVNPRARCGGRRPGVRSLGFPDATRRLFGVYCYRAPGAPDPAPGGWGWGWAGGGGWAGGARDPAAWTPLHV.

An N-terminal signal peptide occupies residues 1–29 (MVCARAALGPGALWAAAWGVLLLTAPAGA). The region spanning 46 to 161 (SVVVQTAPGQ…DAGMVKLDLE (116 aa)) is the Ig-like C2-type domain. Disulfide bonds link Cys-68–Cys-143, Cys-185–Cys-266, Cys-209–Cys-230, Cys-293–Cys-363, and Cys-318–Cys-339. An N-linked (GlcNAc...) asparagine glycan is attached at Asn-132. 2 consecutive Link domains span residues 163 to 268 (VVFP…FCFT) and 273 to 365 (GRVF…YCYR).

This sequence belongs to the HAPLN family. As to expression, expressed predominantly in brain.

Its subcellular location is the secreted. It is found in the extracellular space. The protein resides in the extracellular matrix. In terms of biological role, essential for the proper localization of brevican (BCAN), mainly as a perineuronal nets (PNNs)-type deposition in the brainstem and cerebellum thereby playing a key role in the formation and structural organization of PNNs. Contributes to the formation and transmission of inhibitory GABAergic synapses between Purkinje cells and deep cerebellar nuclei neurons. The polypeptide is Hyaluronan and proteoglycan link protein 4 (HAPLN4) (Homo sapiens (Human)).